The primary structure comprises 160 residues: Ribosome maturation factor RimP (160 aa).

The protein belongs to the RimP family.

Its subcellular location is the cytoplasm. Its function is as follows. Required for maturation of 30S ribosomal subunits. This Orientia tsutsugamushi (strain Boryong) (Rickettsia tsutsugamushi) protein is Ribosome maturation factor RimP.